The sequence spans 206 residues: Cytochrome b6-f complex iron-sulfur subunit, chloroplastic (206 aa).

The transit peptide at Met1–Ala29 directs the protein to the chloroplast. Residues Ile48–Phe68 traverse the membrane as a helical segment. The region spanning Ala92–Thr188 is the Rieske domain. Positions 134, 136, 152, and 155 each coordinate [2Fe-2S] cluster. An intrachain disulfide couples Cys139 to Cys154.

This sequence belongs to the Rieske iron-sulfur protein family. As to quaternary structure, the 4 large subunits of the cytochrome b6-f complex are cytochrome b6, subunit IV (17 kDa polypeptide, petD), cytochrome f and the Rieske protein, while the 4 small subunits are petG, petL, petM and petN. The complex functions as a dimer. [2Fe-2S] cluster serves as cofactor.

The protein resides in the plastid. Its subcellular location is the chloroplast thylakoid membrane. It catalyses the reaction 2 oxidized [plastocyanin] + a plastoquinol + 2 H(+)(in) = 2 reduced [plastocyanin] + a plastoquinone + 4 H(+)(out). Component of the cytochrome b6-f complex, which mediates electron transfer between photosystem II (PSII) and photosystem I (PSI), cyclic electron flow around PSI, and state transitions. This chain is Cytochrome b6-f complex iron-sulfur subunit, chloroplastic (petC), found in Volvox carteri (Green alga).